The primary structure comprises 35 residues: Natriuretic peptide TNPb (35 aa).

An intrachain disulfide couples cysteine 9 to cysteine 25.

As to expression, expressed by the venom gland.

The protein localises to the secreted. In terms of biological role, snake venom natriuretic peptide that exhibits vasoactive and probable hypotensive activity. Is only weakly active on natriuretic peptide receptor-C (NPR3). Stimulates cGMP production through the natriuretic peptide receptor 1 (NPR1) with moderate potencies for the rat NPR1 (EC(50)=1200 nM), and very weak potencies over human NPR1 (30% activation at 10 uM). In vivo, does not impact systolic and diastolic blood pressure, as well as heart rate, when intravenously injected in conscious rabbits. Does not affect the bradycardia due to cardiac afferent stimulation (Bezold-Jarisch reflex). The polypeptide is Natriuretic peptide TNPb (Oxyuranus microlepidotus (Inland taipan)).